A 134-amino-acid polypeptide reads, in one-letter code: Large ribosomal subunit protein bL17 (134 aa).

This sequence belongs to the bacterial ribosomal protein bL17 family. As to quaternary structure, part of the 50S ribosomal subunit. Contacts protein L32.

This chain is Large ribosomal subunit protein bL17, found in Aromatoleum aromaticum (strain DSM 19018 / LMG 30748 / EbN1) (Azoarcus sp. (strain EbN1)).